The chain runs to 443 residues: Enolase (443 aa).

Gln-167 contributes to the (2R)-2-phosphoglycerate binding site. Glu-209 serves as the catalytic Proton donor. Mg(2+) contacts are provided by Asp-246, Glu-291, and Asp-318. The (2R)-2-phosphoglycerate site is built by Lys-343, Arg-372, Ser-373, and Lys-394. Lys-343 acts as the Proton acceptor in catalysis.

This sequence belongs to the enolase family. Component of the RNA degradosome, a multiprotein complex involved in RNA processing and mRNA degradation. Requires Mg(2+) as cofactor.

Its subcellular location is the cytoplasm. It is found in the secreted. The protein localises to the cell surface. The enzyme catalyses (2R)-2-phosphoglycerate = phosphoenolpyruvate + H2O. The protein operates within carbohydrate degradation; glycolysis; pyruvate from D-glyceraldehyde 3-phosphate: step 4/5. Its function is as follows. Catalyzes the reversible conversion of 2-phosphoglycerate (2-PG) into phosphoenolpyruvate (PEP). It is essential for the degradation of carbohydrates via glycolysis. The sequence is that of Enolase from Wigglesworthia glossinidia brevipalpis.